A 186-amino-acid polypeptide reads, in one-letter code: MNVDVLIGEILTLSMMAFALGMDAFSVGLGMGMAKLKRNQVFQIGVIIGLFHVIMPLGGMIAGQFLSGALGALAGYIGGALLLVLGIQMIVASFNKSGEQIISPHGFGLFVFAVGVSLDSFSVGLSLGLYGTKPILTIFLFGLFSMVLTWAGLLLGKKVQTWLGAYSEALGGAILLSFGLKLLLPI.

The next 6 helical transmembrane spans lie at 5–25, 41–61, 72–92, 107–127, 135–155, and 166–186; these read VLIGEILTLSMMAFALGMDAF, VFQIGVIIGLFHVIMPLGGMI, ALAGYIGGALLLVLGIQMIVA, FGLFVFAVGVSLDSFSVGLSL, ILTIFLFGLFSMVLTWAGLLL, and YSEALGGAILLSFGLKLLLPI.

The protein belongs to the MntP (TC 9.B.29) family.

Its subcellular location is the cell membrane. Probably functions as a manganese efflux pump. In Bacillus licheniformis (strain ATCC 14580 / DSM 13 / JCM 2505 / CCUG 7422 / NBRC 12200 / NCIMB 9375 / NCTC 10341 / NRRL NRS-1264 / Gibson 46), this protein is Putative manganese efflux pump MntP.